Reading from the N-terminus, the 351-residue chain is Glycerol-3-phosphate dehydrogenase [NAD(P)+] (351 aa).

Residues serine 12, tryptophan 13, histidine 33, and lysine 114 each coordinate NADPH. Residues lysine 114, glycine 145, and serine 147 each contribute to the sn-glycerol 3-phosphate site. Alanine 149 contacts NADPH. 5 residues coordinate sn-glycerol 3-phosphate: lysine 200, aspartate 253, serine 263, arginine 264, and asparagine 265. Lysine 200 functions as the Proton acceptor in the catalytic mechanism. Arginine 264 lines the NADPH pocket. NADPH contacts are provided by valine 288 and glutamate 290.

The protein belongs to the NAD-dependent glycerol-3-phosphate dehydrogenase family.

It is found in the cytoplasm. It catalyses the reaction sn-glycerol 3-phosphate + NAD(+) = dihydroxyacetone phosphate + NADH + H(+). The catalysed reaction is sn-glycerol 3-phosphate + NADP(+) = dihydroxyacetone phosphate + NADPH + H(+). It functions in the pathway membrane lipid metabolism; glycerophospholipid metabolism. Catalyzes the reduction of the glycolytic intermediate dihydroxyacetone phosphate (DHAP) to sn-glycerol 3-phosphate (G3P), the key precursor for phospholipid synthesis. The polypeptide is Glycerol-3-phosphate dehydrogenase [NAD(P)+] (Lacticaseibacillus casei (strain BL23) (Lactobacillus casei)).